A 726-amino-acid chain; its full sequence is Phenylalanine--tRNA ligase beta subunit (726 aa).

Positions 38–150 (FSSSKGLLFA…NFASLNDDAS (113 aa)) constitute a tRNA-binding domain. In terms of domain architecture, B5 spans 394-467 (DKKVEINFDE…RFYNYDNFKE (74 aa)). Residues aspartate 445, aspartate 451, glutamate 454, and glutamate 455 each contribute to the Mg(2+) site.

The protein belongs to the phenylalanyl-tRNA synthetase beta subunit family. Type 1 subfamily. Tetramer of two alpha and two beta subunits. Requires Mg(2+) as cofactor.

It localises to the cytoplasm. The enzyme catalyses tRNA(Phe) + L-phenylalanine + ATP = L-phenylalanyl-tRNA(Phe) + AMP + diphosphate + H(+). In Mycoplasmopsis synoviae (strain 53) (Mycoplasma synoviae), this protein is Phenylalanine--tRNA ligase beta subunit.